The chain runs to 378 residues: Cobalt-precorrin-5B C(1)-methyltransferase (378 aa).

Belongs to the CbiD family.

It carries out the reaction Co-precorrin-5B + S-adenosyl-L-methionine = Co-precorrin-6A + S-adenosyl-L-homocysteine. The protein operates within cofactor biosynthesis; adenosylcobalamin biosynthesis; cob(II)yrinate a,c-diamide from sirohydrochlorin (anaerobic route): step 6/10. Catalyzes the methylation of C-1 in cobalt-precorrin-5B to form cobalt-precorrin-6A. This Thermoplasma volcanium (strain ATCC 51530 / DSM 4299 / JCM 9571 / NBRC 15438 / GSS1) protein is Cobalt-precorrin-5B C(1)-methyltransferase.